The sequence spans 546 residues: Carboxylic ester hydrolase FVEG_12634 (546 aa).

Residues 72 to 91 (FTDGTKICPQPPSSNTPDPS) form a disordered region. The active-site Acyl-ester intermediate is the S214.

This sequence belongs to the type-B carboxylesterase/lipase family.

It catalyses the reaction a carboxylic ester + H2O = an alcohol + a carboxylate + H(+). Its function is as follows. Carboxylic ester hydrolase; part of the Fusarium detoxification of benzoxazolinone cluster 2 (FDB2) involved in the degradation of benzoxazolinones produced by the host plant. Maize, wheat, and rye produce the 2 benzoxazinone phytoanticipins 2,4-dihy-droxy-7-methoxy-1,4-benzoxazin-3-one (DIMBOA) and 2,4-dihydroxy-1,4-benzoxazin-3-one (DIBOA) that, due to their inherent instability once released, spontaneously degrade to the more stable corresponding benzoxazolinones, 6-methoxy-2-benzoxazolinone (MBOA) and 2-benzoxazolinone (BOA), respectively. The first step in the detoxification of benzoxazolinones involves the hydrolysis of the cyclic ester bond of benzoxazolinones by the FDB1 cluster gamma-lactamase MBL1 to aminophenols. MBL1 is able to convert BOA into 2-aminophenol (2-AP), as well as MBOA into 5-methoxy-2-aminophenol (2-AMP). The FDB2 cluster N-malonyltransferase FDB2/NAT1 then metabolizes aminophenols via N-malonylation to non-toxic malonamic acids. FDB2/NAT1 converts 2-AP into N-(2-hydroxyphenyl) malonamic acid (HPMA) and 2-AMP into N-(2-hydroxy-4-methoxyphenyl) malonamic acid (HMPMA). The duplicated dienlactone hydrolases DLH1 and DLH2 may provide redundant function for hydrolyzing the lactone moiety in the BOA molecule. The roles of the amidases an other enzymes encoded by the 2 FDB clusters have not been identified so far. The sequence is that of Carboxylic ester hydrolase FVEG_12634 from Gibberella moniliformis (strain M3125 / FGSC 7600) (Maize ear and stalk rot fungus).